The sequence spans 662 residues: UvrABC system protein B (662 aa).

Residues 25–182 (KGIEKREKFQ…KKLVEIQYER (158 aa)) form the Helicase ATP-binding domain. Residue 38–45 (GVTGSGKT) participates in ATP binding. A Beta-hairpin motif is present at residues 91-114 (YYDYYQPEAYVAQSDTYIEKDASI). Residues 429–595 (QIDDLYTSIQ…TIIKDIREVI (167 aa)) enclose the Helicase C-terminal domain. The UVR domain maps to 622 to 657 (DKLIEKYEEEMKEAAQNLQFEKAAHLRDVIYKLKKD).

It belongs to the UvrB family. Forms a heterotetramer with UvrA during the search for lesions. Interacts with UvrC in an incision complex.

It is found in the cytoplasm. Its function is as follows. The UvrABC repair system catalyzes the recognition and processing of DNA lesions. A damage recognition complex composed of 2 UvrA and 2 UvrB subunits scans DNA for abnormalities. Upon binding of the UvrA(2)B(2) complex to a putative damaged site, the DNA wraps around one UvrB monomer. DNA wrap is dependent on ATP binding by UvrB and probably causes local melting of the DNA helix, facilitating insertion of UvrB beta-hairpin between the DNA strands. Then UvrB probes one DNA strand for the presence of a lesion. If a lesion is found the UvrA subunits dissociate and the UvrB-DNA preincision complex is formed. This complex is subsequently bound by UvrC and the second UvrB is released. If no lesion is found, the DNA wraps around the other UvrB subunit that will check the other stand for damage. This is UvrABC system protein B from Clostridium botulinum (strain Langeland / NCTC 10281 / Type F).